A 308-amino-acid polypeptide reads, in one-letter code: MIKISRKEYVSMYGPTTGDKVRLGDTELIAEIEKDYTVYGEEIKFGGGKTIRDGMSQSVSPDVNELDAVITNAMIIDYTGIYKADIGIKDGKIAGIGKAGNRDTQDGVGMDLVVGASTEAIAGEGLIVTAGGIDTHIHFISPTQIPTALYSGVTTMIGGGTGPAAGTFATTISPGEWNIKQMIRAAEEYTMNLGFFGKGNTSNVKALEDQIKAGALGFKVHEDCGSTPAVINHSLDIAEKYDVQVAIHTDTLNEGGAVEDTLAAIGGRTIHTFHTEGAGGGHAPDIIKAAGEANILPASTNPTIPFTK.

The region spanning G131–K308 is the Urease domain. The Ni(2+) site is built by H136, H138, K219, H248, and H274. K219 is subject to N6-carboxylysine.

This sequence belongs to the metallo-dependent hydrolases superfamily. Urease alpha subunit family. Heterohexamer of 3 UreA (alpha) and 3 UreB (beta) subunits. The cofactor is Ni cation. Carboxylation allows a single lysine to coordinate two nickel ions.

It is found in the cytoplasm. It catalyses the reaction urea + 2 H2O + H(+) = hydrogencarbonate + 2 NH4(+). The protein operates within nitrogen metabolism; urea degradation; CO(2) and NH(3) from urea (urease route): step 1/1. This chain is Urease subunit beta (ureB), found in Helicobacter mustelae.